The chain runs to 153 residues: Nucleoside diphosphate kinase (153 aa).

The ATP site is built by K13, F61, R89, T95, R106, and N116. H119 serves as the catalytic Pros-phosphohistidine intermediate.

The protein belongs to the NDK family. The cofactor is Mg(2+). Highest levels in the liver and kidney with lower levels in the heart, brain and breast muscle.

It is found in the cytoplasm. Its subcellular location is the cell membrane. It catalyses the reaction a 2'-deoxyribonucleoside 5'-diphosphate + ATP = a 2'-deoxyribonucleoside 5'-triphosphate + ADP. The enzyme catalyses a ribonucleoside 5'-diphosphate + ATP = a ribonucleoside 5'-triphosphate + ADP. Major role in the synthesis of nucleoside triphosphates other than ATP. The ATP gamma phosphate is transferred to the NDP beta phosphate via a ping-pong mechanism, using a phosphorylated active-site intermediate. The chain is Nucleoside diphosphate kinase from Columba livia (Rock dove).